We begin with the raw amino-acid sequence, 433 residues long: Transcription factor elt-2 (433 aa).

Disordered regions lie at residues 1–47 and 194–235; these read MDNN…ELPR and GQPP…RQGL. Positions 27–43 are enriched in polar residues; it reads PTQNMDPPEQNNESQLS. Residues 211–234 show a composition bias toward low complexity; the sequence is AKQSSKKSSSSNRGSNGSASRRQG. The segment at 237–261 adopts a GATA-type zinc-finger fold; that stretch reads CSNCNGTNTTLWRRNAEGDPVCNAC. The tract at residues 275–332 is disordered; that stretch reads SMKKEGALQTRKRKSKSGDSSTPSTSRARERKFERASSSTEKAQRSSNRRAGSAKADR. Residues 310–324 are compositionally biased toward polar residues; sequence ASSSTEKAQRSSNRR.

Interacts with lag-1. Interacts with pha-4. Interacts with rpt-6. In terms of processing, may be ubiquitinated in response to infection by B.pseudomallei. In terms of tissue distribution, expressed in the intestine.

Its subcellular location is the nucleus. Its function is as follows. Transcriptional activator that binds to the consensus sequence 5'-[AT]GATA[AG]-3'. Predominantly directs the transcription of intestinal genes such as ges-1, cpr-6, pho-1, ftn-1, vit-2 and lev-11, and itself. Required for gut-specific differentiation, specifically acting with the GATA region-binding transcription factor elt-7 to control normal gene expression and promote normal formation of the intestine. Regulates intestinal gene expression in response to hypoxia to promote longevity. Modulation of longevity may, in part, be the result of regulation of expression of daf-16 isoforms d and f in the intestine. Regulates tissue specific gene expression at basal levels and in response to bacterial infection in the intestine to control innate immunity. Plays a role in the induction of metal-responsive genes, activating gene expression from zinc-activated promoters and iron-dependent promoters and enhancers. May regulate the expression of genes that control sensitivity to oxidative stress, in a mab-3-dependent manner, and osmotic stress, in conjunction with the GATA region-binding transcription factor elt-3. May play a role in sphingolipid signaling by regulating the expression of the sphingosine-1-phosphate degrading enzyme, sphingosine-1-phosphate lyase. May act with the Notch signaling pathway to promote endodermal gene expression. Has a protective role in response to infection by Gram-negative bacteria such as S.enterica, E.coli, P.aeruginosa and B.pseudomallei, Gram-positive bacterium E.faecalis and fungal pathogen C.neoformans. An association with the 26S proteasome regulatory subunit rpt-6, in part, controls gene expression in response to infection by P.aeruginosa. Regulates gene expression during the recovery phase following a bacterial infection. May act with p38-activated transcription factors to control p38 gene induction in response to bacterial infection. Controls lysosome formation in the intestine by controlling lysosomal gene expression. The chain is Transcription factor elt-2 from Caenorhabditis elegans.